A 69-amino-acid chain; its full sequence is uncharacterized protein (69 aa).

Residues Met32–Ile54 form a helical membrane-spanning segment.

Its subcellular location is the membrane. This is an uncharacterized protein from Sinorhizobium fredii (strain NBRC 101917 / NGR234).